A 247-amino-acid polypeptide reads, in one-letter code: Acetate transporter protein patA (247 aa).

Asparagine 20 carries an N-linked (GlcNAc...) asparagine glycan. 6 helical membrane passes run 37–57 (PPITPIGSPTALGMGAFAIAF), 71–91 (AITNAYIGNCFFTAGLGLVLV), 106–126 (VFGGFGLFNLAFGAINAPAFG), 141–161 (ALGYFLLVWGVFVLFFTIAAM), 169–189 (AMLGTSQITYTLLAASYFAMA), and 202–222 (AAGAFGFVSGLLAWYVVAHLM).

It belongs to the acetate uptake transporter (AceTr) (TC 2.A.96) family.

It localises to the endoplasmic reticulum membrane. It functions in the pathway mycotoxin biosynthesis; patulin biosynthesis. Its function is as follows. Acetate transporter protein; part of the gene cluster that mediates the biosynthesis of patulin, an acetate-derived tetraketide mycotoxin produced by several fungal species that shows antimicrobial properties against several bacteria. May be involved in the uptake of acetate, a substrate for the synthesis of 6-methylsalicylic acid by the polyketide synthase patK. The protein is Acetate transporter protein patA of Aspergillus clavatus (strain ATCC 1007 / CBS 513.65 / DSM 816 / NCTC 3887 / NRRL 1 / QM 1276 / 107).